The primary structure comprises 467 residues: MSKVADALKLMKDEEVEYVDIRFTDPRGKLQHVTLVADLVDEDFFEEGFMFDGSSIAGWKSIDQSDMKLIPDAGSVYIDPFYAEKTLCVHCNVVEPDTGEAYSRDPRGAAVKAEAYLKASGIGDVAYFGPEAEFFIFDDVRYSVTPAKVAYQIDADAGAWNTDSEYEMGNLAHRAGHKGGYFPVNPIDEAQDLRGEMLSTMKRMGMKVDKHHHEVATCQHELGLIFGGLTEQADNILKYKYVIHNVAGMHGKTVTFMPKPMKGDNGSGMHVNMSIWKEQALFAGDKYADLSQEALWFIGGILKQPSVNALTNPATNSYKRLIPGFEAPVLRAYSARNRSGCVRIPWTESPNAKRVEARFPDPSANPYLAFAALLMAGLDGIKNKIDPGPASDKDLYDLPPEELAAIPTVCGSLREALEELEKDHDFLLAGDVFTKDQLEGYMALKWEEVYAYEHTPHPVEYQMYYSC.

Residues 14-98 (EEVEYVDIRF…VHCNVVEPDT (85 aa)) form the GS beta-grasp domain. In terms of domain architecture, GS catalytic spans 106–467 (PRGAAVKAEA…PVEYQMYYSC (362 aa)). Glutamate 131 and glutamate 133 together coordinate Mg(2+). Aspartate 209 contacts ATP. Mg(2+) is bound by residues glutamate 214 and glutamate 221. Residues 265–266 (NG) and glycine 266 each bind L-glutamate. Histidine 270 contributes to the Mg(2+) binding site. ATP is bound by residues 272–274 (NMS) and serine 274. The L-glutamate site is built by arginine 320, glutamate 326, and arginine 338. Residues arginine 338 and arginine 343 each coordinate ATP. Position 356 (glutamate 356) interacts with Mg(2+). Arginine 358 contributes to the L-glutamate binding site. Position 396 is an O-AMP-tyrosine (tyrosine 396).

This sequence belongs to the glutamine synthetase family. In terms of assembly, oligomer of 12 subunits arranged in the form of two hexameric ring. Requires Mg(2+) as cofactor.

Its subcellular location is the cytoplasm. The enzyme catalyses L-glutamate + NH4(+) + ATP = L-glutamine + ADP + phosphate + H(+). With respect to regulation, the activity of this enzyme could be controlled by adenylation under conditions of abundant glutamine. Its function is as follows. Catalyzes the ATP-dependent biosynthesis of glutamine from glutamate and ammonia. This chain is Glutamine synthetase, found in Cereibacter sphaeroides (Rhodobacter sphaeroides).